We begin with the raw amino-acid sequence, 844 residues long: Prickle-like protein 2 (844 aa).

Residues 18–126 (FDFQRNSTSD…NVRPFPVTMT (109 aa)) enclose the PET domain. Ser-92 is subject to Phosphoserine. 3 LIM zinc-binding domains span residues 128–193 (AICE…CLKP), 193–253 (PRCA…LYAE), and 253–317 (EYCD…EDPN). Disordered stretches follow at residues 314–350 (EDPNGSDSSDSAFQNARAKESRRSAKIGKNKGKTEEP) and 481–519 (ESYSDMSSQSFSETRGSIQVPKYEEEEEEEGGLSTQQCR). Over residues 318–327 (GSDSSDSAFQ) the composition is skewed to polar residues. Ser-319, Ser-321, and Ser-322 each carry phosphoserine. The segment covering 481-493 (ESYSDMSSQSFSE) has biased composition (low complexity). Phosphothreonine is present on residues Thr-534, Thr-536, and Thr-539. Ser-543, Ser-546, Ser-607, and Ser-642 each carry phosphoserine. The interval 639-709 (MHQSFDFDGG…HLASEREAIS (71 aa)) is disordered. Residues 682–692 (FRPHRSRRSRR) show a composition bias toward basic residues. Residues 693–709 (SRSDNALHLASEREAIS) show a composition bias toward basic and acidic residues. Ser-731 is modified (phosphoserine). The interval 822–844 (STLGGRGQLHSRKRQKSKNCIIS) is disordered. Cys-841 bears the Cysteine methyl ester mark. Cys-841 is lipidated: S-farnesyl cysteine. A propeptide spans 842 to 844 (IIS) (removed in mature form).

The protein belongs to the prickle / espinas / testin family. As to expression, expressed in brain, eye and testis. Additionally in fetal brain, adult cartilage, pancreatic islet, gastric cancer and uterus tumors.

It localises to the nucleus membrane. This is Prickle-like protein 2 (PRICKLE2) from Homo sapiens (Human).